The primary structure comprises 699 residues: Elongation factor G (699 aa).

One can recognise a tr-type G domain in the interval asparagine 10–threonine 292. GTP is bound by residues alanine 19 to threonine 26, aspartate 90 to histidine 94, and asparagine 144 to aspartate 147. The tract at residues threonine 292–serine 312 is disordered.

It belongs to the TRAFAC class translation factor GTPase superfamily. Classic translation factor GTPase family. EF-G/EF-2 subfamily.

The protein localises to the cytoplasm. Its function is as follows. Catalyzes the GTP-dependent ribosomal translocation step during translation elongation. During this step, the ribosome changes from the pre-translocational (PRE) to the post-translocational (POST) state as the newly formed A-site-bound peptidyl-tRNA and P-site-bound deacylated tRNA move to the P and E sites, respectively. Catalyzes the coordinated movement of the two tRNA molecules, the mRNA and conformational changes in the ribosome. The chain is Elongation factor G from Coxiella burnetii (strain RSA 331 / Henzerling II).